The chain runs to 132 residues: D-ribose pyranase (132 aa).

The Proton donor role is filled by His20. Residues Asp28, His99, and 121–123 contribute to the substrate site; that span reads YSN.

This sequence belongs to the RbsD / FucU family. RbsD subfamily. As to quaternary structure, homodecamer.

The protein resides in the cytoplasm. It catalyses the reaction beta-D-ribopyranose = beta-D-ribofuranose. It functions in the pathway carbohydrate metabolism; D-ribose degradation; D-ribose 5-phosphate from beta-D-ribopyranose: step 1/2. Catalyzes the interconversion of beta-pyran and beta-furan forms of D-ribose. In Streptococcus agalactiae serotype III (strain NEM316), this protein is D-ribose pyranase.